We begin with the raw amino-acid sequence, 146 residues long: Horcolin (146 aa).

Residues 1–21 (MSKPVKIGPWGGNGGSERDVQ) form a disordered region. The 143-residue stretch at 4–146 (PVKIGPWGGN…LDAIGFYITP (143 aa)) folds into the Jacalin-type lectin domain.

This sequence belongs to the jacalin lectin family.

The protein localises to the secreted. The protein resides in the extracellular space. It is found in the apoplast. Mannose-specific lectin. Has a weak agglutinating activity against rabbit erythrocytes. This Hordeum vulgare (Barley) protein is Horcolin.